The sequence spans 106 residues: Urease subunit beta (106 aa).

Belongs to the urease beta subunit family. In terms of assembly, heterotrimer of UreA (gamma), UreB (beta) and UreC (alpha) subunits. Three heterotrimers associate to form the active enzyme.

It localises to the cytoplasm. The catalysed reaction is urea + 2 H2O + H(+) = hydrogencarbonate + 2 NH4(+). The protein operates within nitrogen metabolism; urea degradation; CO(2) and NH(3) from urea (urease route): step 1/1. In Acinetobacter baumannii (strain SDF), this protein is Urease subunit beta.